Here is a 267-residue protein sequence, read N- to C-terminus: Orotidine 5'-phosphate decarboxylase (267 aa).

Lysine 93 serves as the catalytic Proton donor.

This sequence belongs to the OMP decarboxylase family. Type 2 subfamily.

The enzyme catalyses orotidine 5'-phosphate + H(+) = UMP + CO2. Its pathway is pyrimidine metabolism; UMP biosynthesis via de novo pathway; UMP from orotate: step 2/2. This is Orotidine 5'-phosphate decarboxylase from Halobacterium salinarum (strain ATCC 29341 / DSM 671 / R1).